The chain runs to 391 residues: Bifunctional enzyme IspD/IspF (391 aa).

The 2-C-methyl-D-erythritol 4-phosphate cytidylyltransferase stretch occupies residues 1–230 (MLAAGRGKRA…KKKMQMFPDI (230 aa)). Residues 231-391 (RTGNGYDVHS…TVLYPGEIPK (161 aa)) are 2-C-methyl-D-erythritol 2,4-cyclodiphosphate synthase. The a divalent metal cation site is built by Asp237 and His239. 4-CDP-2-C-methyl-D-erythritol 2-phosphate contacts are provided by residues 237 to 239 (DVH) and 263 to 264 (HS). A divalent metal cation is bound at residue His271. 4-CDP-2-C-methyl-D-erythritol 2-phosphate contacts are provided by residues 285 to 287 (DIG), 361 to 364 (TTNE), Phe368, and Arg371.

The protein in the N-terminal section; belongs to the IspD/TarI cytidylyltransferase family. IspD subfamily. In the C-terminal section; belongs to the IspF family. It depends on a divalent metal cation as a cofactor.

The enzyme catalyses 2-C-methyl-D-erythritol 4-phosphate + CTP + H(+) = 4-CDP-2-C-methyl-D-erythritol + diphosphate. The catalysed reaction is 4-CDP-2-C-methyl-D-erythritol 2-phosphate = 2-C-methyl-D-erythritol 2,4-cyclic diphosphate + CMP. It functions in the pathway isoprenoid biosynthesis; isopentenyl diphosphate biosynthesis via DXP pathway; isopentenyl diphosphate from 1-deoxy-D-xylulose 5-phosphate: step 2/6. It participates in isoprenoid biosynthesis; isopentenyl diphosphate biosynthesis via DXP pathway; isopentenyl diphosphate from 1-deoxy-D-xylulose 5-phosphate: step 4/6. Functionally, bifunctional enzyme that catalyzes the formation of 4-diphosphocytidyl-2-C-methyl-D-erythritol from CTP and 2-C-methyl-D-erythritol 4-phosphate (MEP) (IspD), and catalyzes the conversion of 4-diphosphocytidyl-2-C-methyl-D-erythritol 2-phosphate (CDP-ME2P) to 2-C-methyl-D-erythritol 2,4-cyclodiphosphate (ME-CPP) with a corresponding release of cytidine 5-monophosphate (CMP) (IspF). The chain is Bifunctional enzyme IspD/IspF from Bartonella quintana (strain Toulouse) (Rochalimaea quintana).